We begin with the raw amino-acid sequence, 138 residues long: Urease subunit beta (138 aa).

The tract at residues 115-138 is disordered; sequence RMRAAGFGDTGEAAPDDGDTESDQ. Residues 128–138 show a composition bias toward acidic residues; it reads APDDGDTESDQ.

It belongs to the urease beta subunit family. As to quaternary structure, heterotrimer of UreA (gamma), UreB (beta) and UreC (alpha) subunits. Three heterotrimers associate to form the active enzyme.

It localises to the cytoplasm. The catalysed reaction is urea + 2 H2O + H(+) = hydrogencarbonate + 2 NH4(+). It participates in nitrogen metabolism; urea degradation; CO(2) and NH(3) from urea (urease route): step 1/1. The chain is Urease subunit beta from Haloarcula marismortui (strain ATCC 43049 / DSM 3752 / JCM 8966 / VKM B-1809) (Halobacterium marismortui).